Consider the following 323-residue polypeptide: tRNA U34 carboxymethyltransferase (323 aa).

Carboxy-S-adenosyl-L-methionine contacts are provided by residues K91, W105, K110, G130, 181-182, M196, Y200, and R315; that span reads IE.

The protein belongs to the class I-like SAM-binding methyltransferase superfamily. CmoB family. Homotetramer.

It catalyses the reaction carboxy-S-adenosyl-L-methionine + 5-hydroxyuridine(34) in tRNA = 5-carboxymethoxyuridine(34) in tRNA + S-adenosyl-L-homocysteine + H(+). Functionally, catalyzes carboxymethyl transfer from carboxy-S-adenosyl-L-methionine (Cx-SAM) to 5-hydroxyuridine (ho5U) to form 5-carboxymethoxyuridine (cmo5U) at position 34 in tRNAs. This chain is tRNA U34 carboxymethyltransferase, found in Sodalis glossinidius (strain morsitans).